A 90-amino-acid polypeptide reads, in one-letter code: MGELPYKIQELKLRRIEELNNKLRNELARERMTASNACLSIIDYTSTHKDYAVPEVWGYPMVGENPYNNTMRKNNFARSHEETSACCTIM.

Cys-86 carries the S-palmitoyl cysteine lipid modification. Residue Cys-87 is modified to Cysteine methyl ester. Cys-87 carries the S-farnesyl cysteine lipid modification. Residues 88 to 90 (TIM) constitute a propeptide, removed in mature form.

The protein belongs to the G protein gamma family. As to quaternary structure, g proteins are composed of 3 units, alpha, beta and gamma.

It is found in the membrane. The protein is Guanine nucleotide-binding protein subunit gamma of Kluyveromyces lactis (strain ATCC 8585 / CBS 2359 / DSM 70799 / NBRC 1267 / NRRL Y-1140 / WM37) (Yeast).